The primary structure comprises 469 residues: UDP-N-acetylmuramoylalanine--D-glutamate ligase (469 aa).

110–116 (GTNGKST) lines the ATP pocket.

Belongs to the MurCDEF family.

The protein localises to the cytoplasm. It carries out the reaction UDP-N-acetyl-alpha-D-muramoyl-L-alanine + D-glutamate + ATP = UDP-N-acetyl-alpha-D-muramoyl-L-alanyl-D-glutamate + ADP + phosphate + H(+). The protein operates within cell wall biogenesis; peptidoglycan biosynthesis. Functionally, cell wall formation. Catalyzes the addition of glutamate to the nucleotide precursor UDP-N-acetylmuramoyl-L-alanine (UMA). The protein is UDP-N-acetylmuramoylalanine--D-glutamate ligase of Synechococcus sp. (strain JA-3-3Ab) (Cyanobacteria bacterium Yellowstone A-Prime).